A 338-amino-acid polypeptide reads, in one-letter code: Ornithine carbamoyltransferase, catabolic (338 aa).

Residues 65–68 (STRT), glutamine 92, arginine 116, and 143–146 (HPTQ) each bind carbamoyl phosphate. L-ornithine-binding positions include asparagine 175, aspartate 239, and 243–244 (SM). Carbamoyl phosphate-binding positions include 280-281 (CL) and arginine 325.

This sequence belongs to the aspartate/ornithine carbamoyltransferase superfamily. OTCase family.

It is found in the cytoplasm. The catalysed reaction is carbamoyl phosphate + L-ornithine = L-citrulline + phosphate + H(+). Its pathway is amino-acid degradation; L-arginine degradation via ADI pathway; carbamoyl phosphate from L-arginine: step 2/2. In terms of biological role, reversibly catalyzes the transfer of the carbamoyl group from carbamoyl phosphate (CP) to the N(epsilon) atom of ornithine (ORN) to produce L-citrulline. The protein is Ornithine carbamoyltransferase, catabolic of Treponema denticola (strain ATCC 35405 / DSM 14222 / CIP 103919 / JCM 8153 / KCTC 15104).